Here is an 855-residue protein sequence, read N- to C-terminus: Probable inactive ATP-dependent zinc metalloprotease FTSHI 4, chloroplastic (855 aa).

A chloroplast-targeting transit peptide spans 1–78; it reads MTFYISSSLT…SFESTESSVS (78 aa). A helical transmembrane segment spans residues 242-262; sequence VATFVVWSMRLALFVSLYVWI. 356-363 is a binding site for ATP; that stretch reads GPPGTGKT.

It belongs to the AAA ATPase family. Homooligomer. Interacts with FtsHi2. Ubiquitous but preferentially expressed in young leaves.

Its subcellular location is the plastid. It is found in the chloroplast thylakoid membrane. Functions in chloroplast biogenesis and chloroplast division. Required for plastid development during embryogenesis. Might be involved in chaperone functions or play a structural role in the thylakoid FtsH complex. This Arabidopsis thaliana (Mouse-ear cress) protein is Probable inactive ATP-dependent zinc metalloprotease FTSHI 4, chloroplastic.